Here is a 124-residue protein sequence, read N- to C-terminus: Fluoride-specific ion channel FluC 1 (124 aa).

The next 4 membrane-spanning stretches (helical) occupy residues 4 to 24 (VLIG…GAWI), 36 to 56 (GTFA…GLVV), 67 to 87 (VVLG…LLDL), and 103 to 123 (AALS…LGWG). Glycine 75 and threonine 78 together coordinate Na(+).

It belongs to the fluoride channel Fluc/FEX (TC 1.A.43) family.

It is found in the cell membrane. The catalysed reaction is fluoride(in) = fluoride(out). Its activity is regulated as follows. Na(+) is not transported, but it plays an essential structural role and its presence is essential for fluoride channel function. Fluoride-specific ion channel. Important for reducing fluoride concentration in the cell, thus reducing its toxicity. The chain is Fluoride-specific ion channel FluC 1 from Symbiobacterium thermophilum (strain DSM 24528 / JCM 14929 / IAM 14863 / T).